The following is a 431-amino-acid chain: Guanine nucleotide exchange factor rei-2 (431 aa).

Residues 1 to 21 are compositionally biased toward polar residues; that stretch reads MDETATSSEVTETFVSDPTTR. Residues 1–28 form a disordered region; it reads MDETATSSEVTETFVSDPTTRQFEEDGH. Coiled coils occupy residues 149–171 and 214–247; these read EVLN…AESL and LEAQ…RISE. The tract at residues 249 to 298 is disordered; it reads IHEERSTGSLESAVSSDQEDQKSDFKSSESLPGNPPPYAPTAPPPYEDKY. The span at 255–264 shows a compositional bias: polar residues; the sequence is TGSLESAVSS. The segment covering 281–293 has biased composition (pro residues); that stretch reads GNPPPYAPTAPPP.

The protein belongs to the SH3BP5 family. In terms of assembly, interacts with rab-11.1. Binds preferentially to the GDP-bound form of rab-11.1.

Functionally, guanine nucleotide exchange factor for Rab GTPase Rab-11.1. May spatially and temporally regulate the distribution of Rab-11.1 to target membranes during embryogenesis. May play a role in cytokinesis, probably by targeting rab-11.1 to the cleavage furrows. This is Guanine nucleotide exchange factor rei-2 from Caenorhabditis elegans.